Here is a 273-residue protein sequence, read N- to C-terminus: Shikimate dehydrogenase (NADP(+)) (273 aa).

Shikimate-binding positions include S19–S21 and T66. Catalysis depends on K70, which acts as the Proton acceptor. The shikimate site is built by N91 and D107. Residues G131–A135 and M218 each bind NADP(+). Y220 serves as a coordination point for shikimate. Residue G242 participates in NADP(+) binding.

Belongs to the shikimate dehydrogenase family. In terms of assembly, homodimer.

The catalysed reaction is shikimate + NADP(+) = 3-dehydroshikimate + NADPH + H(+). The protein operates within metabolic intermediate biosynthesis; chorismate biosynthesis; chorismate from D-erythrose 4-phosphate and phosphoenolpyruvate: step 4/7. Its function is as follows. Involved in the biosynthesis of the chorismate, which leads to the biosynthesis of aromatic amino acids. Catalyzes the reversible NADPH linked reduction of 3-dehydroshikimate (DHSA) to yield shikimate (SA). The polypeptide is Shikimate dehydrogenase (NADP(+)) (Buchnera aphidicola subsp. Acyrthosiphon pisum (strain 5A)).